A 247-amino-acid polypeptide reads, in one-letter code: Phosphonates import ATP-binding protein PhnC (247 aa).

In terms of domain architecture, ABC transporter spans 5-246 (IEVKNLVKNY…EDDIRKVYQT (242 aa)). 37–44 (GESGAGKS) provides a ligand contact to ATP.

The protein belongs to the ABC transporter superfamily. Phosphonates importer (TC 3.A.1.9.1) family. The complex is composed of two ATP-binding proteins (PhnC), two transmembrane proteins (PhnE) and a solute-binding protein (PhnD).

It localises to the cell inner membrane. It carries out the reaction phosphonate(out) + ATP + H2O = phosphonate(in) + ADP + phosphate + H(+). Part of the ABC transporter complex PhnCDE involved in phosphonates import. Responsible for energy coupling to the transport system. This chain is Phosphonates import ATP-binding protein PhnC, found in Fusobacterium nucleatum subsp. nucleatum (strain ATCC 25586 / DSM 15643 / BCRC 10681 / CIP 101130 / JCM 8532 / KCTC 2640 / LMG 13131 / VPI 4355).